A 449-amino-acid polypeptide reads, in one-letter code: UDP-N-acetylmuramoylalanine--D-glutamate ligase (449 aa).

118–124 is a binding site for ATP; the sequence is GTNGKTT.

The protein belongs to the MurCDEF family.

It is found in the cytoplasm. It carries out the reaction UDP-N-acetyl-alpha-D-muramoyl-L-alanine + D-glutamate + ATP = UDP-N-acetyl-alpha-D-muramoyl-L-alanyl-D-glutamate + ADP + phosphate + H(+). Its pathway is cell wall biogenesis; peptidoglycan biosynthesis. Its function is as follows. Cell wall formation. Catalyzes the addition of glutamate to the nucleotide precursor UDP-N-acetylmuramoyl-L-alanine (UMA). The sequence is that of UDP-N-acetylmuramoylalanine--D-glutamate ligase from Staphylococcus saprophyticus subsp. saprophyticus (strain ATCC 15305 / DSM 20229 / NCIMB 8711 / NCTC 7292 / S-41).